A 156-amino-acid polypeptide reads, in one-letter code: Small ribosomal subunit protein uS7 (156 aa).

Belongs to the universal ribosomal protein uS7 family. In terms of assembly, part of the 30S ribosomal subunit. Contacts proteins S9 and S11.

One of the primary rRNA binding proteins, it binds directly to 16S rRNA where it nucleates assembly of the head domain of the 30S subunit. Is located at the subunit interface close to the decoding center, probably blocks exit of the E-site tRNA. The sequence is that of Small ribosomal subunit protein uS7 from Buchnera aphidicola subsp. Acyrthosiphon pisum (strain Tuc7).